A 136-amino-acid polypeptide reads, in one-letter code: Transcription antitermination protein NusB (136 aa).

Belongs to the NusB family.

Functionally, involved in transcription antitermination. Required for transcription of ribosomal RNA (rRNA) genes. Binds specifically to the boxA antiterminator sequence of the ribosomal RNA (rrn) operons. In Salinispora tropica (strain ATCC BAA-916 / DSM 44818 / JCM 13857 / NBRC 105044 / CNB-440), this protein is Transcription antitermination protein NusB.